A 352-amino-acid polypeptide reads, in one-letter code: F-box/kelch-repeat protein At1g57790 (352 aa).

Positions 10 to 56 constitute an F-box domain; the sequence is KNLWKDLPLELLSSVMTFLEIKDNVRASVVCKSWFEAAVSVRVIDKS. 2 Kelch repeats span residues 148 to 189 and 190 to 234; these read VVFT…HNNV and VFSN…WNEG.

The protein is F-box/kelch-repeat protein At1g57790 of Arabidopsis thaliana (Mouse-ear cress).